Reading from the N-terminus, the 177-residue chain is ATP synthase subunit delta (177 aa).

Belongs to the ATPase delta chain family. In terms of assembly, F-type ATPases have 2 components, F(1) - the catalytic core - and F(0) - the membrane proton channel. F(1) has five subunits: alpha(3), beta(3), gamma(1), delta(1), epsilon(1). F(0) has three main subunits: a(1), b(2) and c(10-14). The alpha and beta chains form an alternating ring which encloses part of the gamma chain. F(1) is attached to F(0) by a central stalk formed by the gamma and epsilon chains, while a peripheral stalk is formed by the delta and b chains.

Its subcellular location is the cell inner membrane. F(1)F(0) ATP synthase produces ATP from ADP in the presence of a proton or sodium gradient. F-type ATPases consist of two structural domains, F(1) containing the extramembraneous catalytic core and F(0) containing the membrane proton channel, linked together by a central stalk and a peripheral stalk. During catalysis, ATP synthesis in the catalytic domain of F(1) is coupled via a rotary mechanism of the central stalk subunits to proton translocation. In terms of biological role, this protein is part of the stalk that links CF(0) to CF(1). It either transmits conformational changes from CF(0) to CF(1) or is implicated in proton conduction. The polypeptide is ATP synthase subunit delta (Shewanella woodyi (strain ATCC 51908 / MS32)).